We begin with the raw amino-acid sequence, 135 residues long: Protein E6 (135 aa).

2 zinc fingers span residues 11–47 and 83–119; these read CIWCKKGLDKVDAKRCHEKKIRIACRNGKHCAVCTSC and CMYCGGCLTRDEKERHRLFCEDFWIFRHQVRGRCYLC.

It belongs to the papillomaviridae E6 protein family. Forms homodimers. Interacts with ubiquitin-protein ligase UBE3A/E6-AP; this interaction stimulates UBE3A ubiquitin activity. Interacts with host BAK1.

The protein resides in the host cytoplasm. Its subcellular location is the host nucleus. Functionally, plays a major role in the induction and maintenance of cellular transformation. E6 associates with host UBE3A/E6-AP ubiquitin-protein ligase and modulates its activity. Protects host keratinocytes from apoptosis by mediating the degradation of host BAK1. May also inhibit host immune response. The chain is Protein E6 from Cervus elaphus (Red deer).